The sequence spans 292 residues: Protein CHLOROPLAST ENHANCING STRESS TOLERANCE, chloroplastic (292 aa).

The span at 1–15 (MALLSPPSPPPPLPP) shows a compositional bias: pro residues. A chloroplast-targeting transit peptide spans 1–67 (MALLSPPSPP…RSSRRRRRVA (67 aa)). Disordered stretches follow at residues 1–119 (MALL…DLED) and 206–225 (MEAP…KATD). 2 stretches are compositionally biased toward low complexity: residues 49–58 (STANARAYSR) and 94–107 (ASSD…ASSA). A helical transmembrane segment spans residues 267-287 (ALYLLTAFPVIIGISVVLILF).

This sequence belongs to the Y3IP1/CEST family.

It localises to the plastid. Its subcellular location is the chloroplast thylakoid membrane. Functionally, involved in light-induced chloroplast development and growth. Involved in the plant response to abiotic and photooxidative stresses. May be involved in the suppression of photooxidative damage. The chain is Protein CHLOROPLAST ENHANCING STRESS TOLERANCE, chloroplastic from Oryza sativa subsp. indica (Rice).